The following is a 619-amino-acid chain: CREB-regulated transcription coactivator 3 (619 aa).

The interval 1–103 (MAASPGSGSA…LVERPSRNRF (103 aa)) is required for interaction with HTLV-1 TAX. A phosphoserine mark is found at S4 and S62. Residues 103–150 (FHPLHRRSGDKPGRQFDGSAFGANYSSQPLDESWPRQQPPWKDEKHPG) are disordered. Position 160 is a phosphothreonine (T160). A Phosphoserine; by SIK2 modification is found at S162. Residues 165–175 (ALHTSALSTKP) show a composition bias toward polar residues. Positions 165–185 (ALHTSALSTKPQDPYGGGGQS) are disordered. K232 participates in a covalent cross-link: Glycyl lysine isopeptide (Lys-Gly) (interchain with G-Cter in SUMO2). Residues S273, S329, S332, S370, S391, S396, S410, and S443 each carry the phosphoserine modification. The segment at 375–431 (STTNLSGPSRRRQPPVSPLTLSPGPEAHQGFSRQLSSTSPLAPYPTSQMVSSDRSQL) is disordered. The interval 380-401 (SGPSRRRQPPVSPLTLSPGPEA) is required for interaction with PPP2CA and PPP2R1A. Polar residues predominate over residues 405–431 (FSRQLSSTSPLAPYPTSQMVSSDRSQL).

This sequence belongs to the TORC family. Binding, as a tetramer, through its N-terminal region, with the bZIP domain of CREB1 enhances recruitment of TAF4 to the promoter. 'Arg-314' in the bZIP domain of CREB1 is essential for this interaction. Interacts (when phosphorylated at Ser-162 and Se-273) with 14-3-3 proteins. Interacts with YWHAE. Interacts (when phosphorylated at Ser-391) with phosphatase PP2A catalytic subunit PPP2CA and regulatory subunits PPP2R1A and PPP2R2A. Interacts, via the N-terminal with the ankyrin repeats of BCL3, to form a complex with CREB1 on CRE and TxRE responsive elements and represses HTLV-1 LTR-mediated transcription. In terms of assembly, (Microbial infection) Interacts with HTLV-1 protein Tax; this interaction enhances tax transcriptional activity. Phosphorylation/dephosphorylation states of Ser-273 are required for regulating transduction of CREB activity. CRTCs/TORCs are inactive when phosphorylated, and active when dephosphorylated at this site. May be phosphorylated at Ser-391 by MAPK3/ERK1 and/or MAPK1/ERK2 or by some cyclin-dependent kinases such as CDK1,CDK2 or CDK5. Following adenylyl cyclase activation, dephosphorylated at Ser-162 and Ser-273 resulting in its dissociation from 14-3-3 proteins probably promoting CRTC3 translocation into the nucleus. As to expression, predominantly expressed in B and T lymphocytes. Highest levels in lung. Also expressed in brain, colon, heart, kidney, ovary, and prostate. Weak expression in liver, pancreas, muscle, small intestine, spleen and stomach.

Its subcellular location is the nucleus. The protein resides in the cytoplasm. Functionally, transcriptional coactivator for CREB1 which activates transcription through both consensus and variant cAMP response element (CRE) sites. Acts as a coactivator, in the SIK/TORC signaling pathway, being active when dephosphorylated and acts independently of CREB1 'Ser-133' phosphorylation. Enhances the interaction of CREB1 with TAF4. Regulates the expression of specific CREB-activated genes such as the steroidogenic gene, StAR. Potent coactivator of PPARGC1A and inducer of mitochondrial biogenesis in muscle cells. Also coactivator for TAX activation of the human T-cell leukemia virus type 1 (HTLV-1) long terminal repeats (LTR). In Homo sapiens (Human), this protein is CREB-regulated transcription coactivator 3 (CRTC3).